The primary structure comprises 341 residues: Small ribosomal subunit biogenesis GTPase RsgA (341 aa).

Residues 112 to 268 (RQQLIAANLD…LIDTPGMREL (157 aa)) enclose the CP-type G domain. GTP contacts are provided by residues 157–160 (TKVD) and 210–218 (GSSGAGKST). Residues Cys290, Cys295, His297, and Cys303 each contribute to the Zn(2+) site.

The protein belongs to the TRAFAC class YlqF/YawG GTPase family. RsgA subfamily. In terms of assembly, monomer. Associates with 30S ribosomal subunit, binds 16S rRNA. The cofactor is Zn(2+).

It localises to the cytoplasm. Functionally, one of several proteins that assist in the late maturation steps of the functional core of the 30S ribosomal subunit. Helps release RbfA from mature subunits. May play a role in the assembly of ribosomal proteins into the subunit. Circularly permuted GTPase that catalyzes slow GTP hydrolysis, GTPase activity is stimulated by the 30S ribosomal subunit. This Xylella fastidiosa (strain Temecula1 / ATCC 700964) protein is Small ribosomal subunit biogenesis GTPase RsgA.